Consider the following 292-residue polypeptide: Porphobilinogen deaminase (292 aa).

Cys-236 carries the post-translational modification S-(dipyrrolylmethanemethyl)cysteine.

This sequence belongs to the HMBS family. As to quaternary structure, monomer. The cofactor is dipyrromethane.

The enzyme catalyses 4 porphobilinogen + H2O = hydroxymethylbilane + 4 NH4(+). It functions in the pathway porphyrin-containing compound metabolism; protoporphyrin-IX biosynthesis; coproporphyrinogen-III from 5-aminolevulinate: step 2/4. Its function is as follows. Tetrapolymerization of the monopyrrole PBG into the hydroxymethylbilane pre-uroporphyrinogen in several discrete steps. In Wolbachia sp. subsp. Drosophila simulans (strain wRi), this protein is Porphobilinogen deaminase.